The sequence spans 856 residues: V-type proton ATPase 116 kDa subunit a 2 (856 aa).

Topologically, residues 1-393 (MGSLFRSETM…DAYGVGSYRE (393 aa)) are cytoplasmic. A helical membrane pass occupies residues 394–412 (VNPALFTIITFPFLFAVMF). Residues 413–414 (GD) lie on the Vacuolar side of the membrane. Residues 415–431 (FGHGFVMFLFALLLVLN) form a helical membrane-spanning segment. At 432-445 (ENHPRLNQSQEIMR) the chain is on the cytoplasmic side. A helical membrane pass occupies residues 446–475 (MFFNGRYILLLMGLFSVYTGLIYNDCFSKS). Over 476–549 (VNLFGSGWNV…ATNRLTFLNS (74 aa)) the chain is Vacuolar. Residues N484 and N505 are each glycosylated (N-linked (GlcNAc...) asparagine). The helical transmembrane segment at 550 to 569 (FKMKMSVILGIIHMTFGVIL) threads the bilayer. At 570–587 (GIFNHLHFRKKFNIYLVS) the chain is on the cytoplasmic side. The helical transmembrane segment at 588–608 (IPELLFMLCIFGYLIFMIFYK) threads the bilayer. At 609 to 651 (WLVFSAETSRVAPSILIEFINMFLFPASKTSGLYTGQEYVQRV) the chain is on the vacuolar side. A helical membrane pass occupies residues 652-671 (LLVVTALSVPVLFLGKPLFL). The Cytoplasmic segment spans residues 672–739 (LWLHNGRSCF…EILMTQVIHS (68 aa)). A phosphoserine mark is found at S695 and S700. A helical membrane pass occupies residues 740-764 (IEYCLGCISNTASYLRLWALSLAHA). The Vacuolar portion of the chain corresponds to 765–785 (QLSDVLWAMLMRVGLRVDTTY). The helical transmembrane segment at 786-824 (GVLLLLPVIALFAVLTIFILLIMEGLSAFLHAIRLHWVE) threads the bilayer. Residues 825 to 856 (FQNKFYVGAGTKFVPFSFSLLSSKFNNDDSVA) are Cytoplasmic-facing.

It belongs to the V-ATPase 116 kDa subunit family. As to quaternary structure, V-ATPase is a heteromultimeric enzyme made up of two complexes: the ATP-hydrolytic V1 complex and the proton translocation V0 complex. The V1 complex consists of three catalytic AB heterodimers that form a heterohexamer, three peripheral stalks each consisting of EG heterodimers, one central rotor including subunits D and F, and the regulatory subunits C and H. The proton translocation complex V0 consists of the proton transport subunit a, a ring of proteolipid subunits c9c'', rotary subunit d, subunits e and f, and the accessory subunits ATP6AP1/Ac45 and ATP6AP2/PRR. Directly interacts with PSCD2 through its N-terminal cytosolic tail in an intra-endosomal acidification-dependent manner. Disruption of this interaction results in the inhibition of endocytosis. Interacts with SPAAR.

The protein resides in the cell membrane. It localises to the endosome membrane. Functionally, subunit of the V0 complex of vacuolar(H+)-ATPase (V-ATPase), a multisubunit enzyme composed of a peripheral complex (V1) that hydrolyzes ATP and a membrane integral complex (V0) that translocates protons. V-ATPase is responsible for acidifying and maintaining the pH of intracellular compartments and in some cell types, is targeted to the plasma membrane, where it is responsible for acidifying the extracellular environment. Essential component of the endosomal pH-sensing machinery. May play a role in maintaining the Golgi functions, such as glycosylation maturation, by controlling the Golgi pH. In aerobic conditions, involved in intracellular iron homeostasis, thus triggering the activity of Fe(2+) prolyl hydroxylase (PHD) enzymes, and leading to HIF1A hydroxylation and subsequent proteasomal degradation. The polypeptide is V-type proton ATPase 116 kDa subunit a 2 (ATP6V0A2) (Homo sapiens (Human)).